We begin with the raw amino-acid sequence, 202 residues long: MKEKLTVSDSKKLFHEQFPYVIPGLYKRIVDEMLVELNLLNHQNEFIQDDLFCVGLTETFKELTKGYKPEEHLRVLFESLCNSSNFEPKKIKEASKKTLEVYKDKSLKEISILLKQKSDSNLYSSRILNLGIYLIIANATDFKDIKDPEKNKIISDIINKLNLSFNKAEKDIGIYKSSILKMEQAKELLQEAKIKDKKEKKK.

A coiled-coil region spans residues 174–202 (IYKSSILKMEQAKELLQEAKIKDKKEKKK).

It belongs to the THF1 family.

Functionally, may be involved in photosynthetic membrane biogenesis. This Prochlorococcus marinus subsp. pastoris (strain CCMP1986 / NIES-2087 / MED4) protein is Protein Thf1.